The following is a 307-amino-acid chain: MDSDSHNTLQTVNTFLTHLASERRLSPHTVNGYQRDLIEARTLLGSQPWDTLTVHDMRSLAASLHRQGKSGKTIQRMLSTLRTFFRYLMREGLARDNPAIDIRAPKSGKRLPKALDVDQVSHLLDAGTSNSEPLALRDQAIMELLYACGLRLAELLSLNLDSIDLHESQLLVTGKGNKTRQLPVGKPALTAVRRWLQVRPMLIKSSDQNALFISKNGRRLSPSSVQQRLKRHALERGLDAHLHPHKLRHSFATHLLESSGDLRAVQELLGHADLATTQVYTHLDFQHLAQVYDGAHPRAQRRKDDDE.

The 84-residue stretch at 6–89 (HNTLQTVNTF…TLRTFFRYLM (84 aa)) folds into the Core-binding (CB) domain. The Tyr recombinase domain maps to 110–293 (RLPKALDVDQ…DFQHLAQVYD (184 aa)). Residues Arg-151, Lys-175, His-245, Arg-248, and His-271 contribute to the active site. The O-(3'-phospho-DNA)-tyrosine intermediate role is filled by Tyr-280.

The protein belongs to the 'phage' integrase family. XerC subfamily. In terms of assembly, forms a cyclic heterotetrameric complex composed of two molecules of XerC and two molecules of XerD.

The protein localises to the cytoplasm. Functionally, site-specific tyrosine recombinase, which acts by catalyzing the cutting and rejoining of the recombining DNA molecules. The XerC-XerD complex is essential to convert dimers of the bacterial chromosome into monomers to permit their segregation at cell division. It also contributes to the segregational stability of plasmids. The protein is Tyrosine recombinase XerC of Alcanivorax borkumensis (strain ATCC 700651 / DSM 11573 / NCIMB 13689 / SK2).